A 229-amino-acid polypeptide reads, in one-letter code: UPF0173 metal-dependent hydrolase SAB1566c (229 aa).

It belongs to the UPF0173 family.

This is UPF0173 metal-dependent hydrolase SAB1566c from Staphylococcus aureus (strain bovine RF122 / ET3-1).